The sequence spans 121 residues: Large ribosomal subunit protein uL18 (121 aa).

The protein belongs to the universal ribosomal protein uL18 family. Part of the 50S ribosomal subunit; part of the 5S rRNA/L5/L18/L25 subcomplex. Contacts the 5S and 23S rRNAs.

Functionally, this is one of the proteins that bind and probably mediate the attachment of the 5S RNA into the large ribosomal subunit, where it forms part of the central protuberance. This chain is Large ribosomal subunit protein uL18, found in Verminephrobacter eiseniae (strain EF01-2).